The following is a 207-amino-acid chain: MARYIGPKAKLSRREGTDLFLKSARRSIADKSKFDTKPGQHGRTSGQRTSDFGLQLREKQKVKRMYGVLEKQFRRYFEAADKKKGNTGANLLSLLESRLDNVVYRMGFGSTRSEARQLVSHKAITVNGQSVNIPSYMVKVGDVVAVREKSKKQARIVEALQLAGQVGFPAWVEVSADKAEGTFKKSPDRDEFGADINESLIVELYSR.

Residues 30–53 are disordered; the sequence is DKSKFDTKPGQHGRTSGQRTSDFG. Over residues 42–52 the composition is skewed to polar residues; the sequence is GRTSGQRTSDF. The S4 RNA-binding domain occupies 97 to 157; sequence SRLDNVVYRM…EKSKKQARIV (61 aa).

The protein belongs to the universal ribosomal protein uS4 family. As to quaternary structure, part of the 30S ribosomal subunit. Contacts protein S5. The interaction surface between S4 and S5 is involved in control of translational fidelity.

One of the primary rRNA binding proteins, it binds directly to 16S rRNA where it nucleates assembly of the body of the 30S subunit. In terms of biological role, with S5 and S12 plays an important role in translational accuracy. The sequence is that of Small ribosomal subunit protein uS4 from Delftia acidovorans (strain DSM 14801 / SPH-1).